Reading from the N-terminus, the 466-residue chain is Glutamyl-tRNA reductase (466 aa).

Residues 47-50, Ser-107, 112-114, and Gln-118 each bind substrate; these read TCNR and EQQ. Cys-48 serves as the catalytic Nucleophile. 194–199 is an NADP(+) binding site; that stretch reads GAGAMS.

Belongs to the glutamyl-tRNA reductase family. In terms of assembly, homodimer.

It carries out the reaction (S)-4-amino-5-oxopentanoate + tRNA(Glu) + NADP(+) = L-glutamyl-tRNA(Glu) + NADPH + H(+). It functions in the pathway porphyrin-containing compound metabolism; protoporphyrin-IX biosynthesis; 5-aminolevulinate from L-glutamyl-tRNA(Glu): step 1/2. In terms of biological role, catalyzes the NADPH-dependent reduction of glutamyl-tRNA(Glu) to glutamate 1-semialdehyde (GSA). The chain is Glutamyl-tRNA reductase from Corynebacterium efficiens (strain DSM 44549 / YS-314 / AJ 12310 / JCM 11189 / NBRC 100395).